Reading from the N-terminus, the 127-residue chain is Gamma-synuclein (127 aa).

2 tandem repeats follow at residues 20–30 and 31–41. Positions 20–67 are 4 X 11 AA tandem repeats of [EGSA]-K-T-K-[EQ]-[GQ]-V-X(4); that stretch reads EKTKQGVTEAAEKTKEGVMYVGAKTKENVVQSVTSVAEKTKEQANAVS. A 3; approximate repeat occupies 42–56; that stretch reads AKTKENVVQSVTSVA. Repeat unit 4 spans residues 57–67; sequence EKTKEQANAVS. A phosphoserine mark is found at serine 67 and serine 72. Positions 96 to 127 are disordered; that stretch reads RKEDLRPSAPQQEGEASKEKEEVAEEAQSGGD. Serine 124 carries the phosphoserine; by BARK1, CaMK2 and CK2 modification.

It belongs to the synuclein family. In terms of assembly, may be a centrosome-associated protein. Interacts with MYOC; affects its secretion and its aggregation. Post-translationally, phosphorylated. Phosphorylation by GRK5 appears to occur on residues distinct from the residue phosphorylated by other kinases. In terms of tissue distribution, highly expressed in brain, particularly in the substantia nigra. Also expressed in the corpus callosum, heart, skeletal muscle, ovary, testis, colon and spleen. Weak expression in pancreas, kidney and lung.

It localises to the cytoplasm. Its subcellular location is the perinuclear region. The protein resides in the cytoskeleton. The protein localises to the microtubule organizing center. It is found in the centrosome. It localises to the spindle. Functionally, plays a role in neurofilament network integrity. May be involved in modulating axonal architecture during development and in the adult. In vitro, increases the susceptibility of neurofilament-H to calcium-dependent proteases. May also function in modulating the keratin network in skin. Activates the MAPK and Elk-1 signal transduction pathway. This is Gamma-synuclein (SNCG) from Homo sapiens (Human).